A 381-amino-acid polypeptide reads, in one-letter code: Cytochrome b (381 aa).

The next 4 helical transmembrane spans lie at 34–54 (FGSL…FLAM), 78–99 (WLIR…YLHI), 114–134 (WNTG…GYVL), and 179–199 (FFTF…VHLL). Residues H84 and H98 each coordinate heme b. Heme b contacts are provided by H183 and H197. H202 lines the a ubiquinone pocket. The next 4 helical transmembrane spans lie at 227-247 (YKDL…TLFS), 289-309 (LGGV…PTLH), 321-341 (LTQI…WIGG), and 348-368 (FIII…LLMP).

The protein belongs to the cytochrome b family. As to quaternary structure, the cytochrome bc1 complex contains 3 respiratory subunits (MT-CYB, CYC1 and UQCRFS1), 2 core proteins (UQCRC1 and UQCRC2) and probably 6 low-molecular weight proteins. Requires heme b as cofactor.

The protein localises to the mitochondrion inner membrane. In terms of biological role, component of the ubiquinol-cytochrome c reductase complex (complex III or cytochrome b-c1 complex) that is part of the mitochondrial respiratory chain. The b-c1 complex mediates electron transfer from ubiquinol to cytochrome c. Contributes to the generation of a proton gradient across the mitochondrial membrane that is then used for ATP synthesis. This Chelonia mydas (Green sea-turtle) protein is Cytochrome b (MT-CYB).